The primary structure comprises 185 residues: Elongation factor P 1 (185 aa).

Belongs to the elongation factor P family.

It is found in the cytoplasm. It functions in the pathway protein biosynthesis; polypeptide chain elongation. Functionally, involved in peptide bond synthesis. Stimulates efficient translation and peptide-bond synthesis on native or reconstituted 70S ribosomes in vitro. Probably functions indirectly by altering the affinity of the ribosome for aminoacyl-tRNA, thus increasing their reactivity as acceptors for peptidyl transferase. This is Elongation factor P 1 (efp1) from Chlamydia trachomatis serovar D (strain ATCC VR-885 / DSM 19411 / UW-3/Cx).